The primary structure comprises 181 residues: Ribulose bisphosphate carboxylase small subunit, chloroplastic (181 aa).

The transit peptide at 1–54 (MASSMLSSAAVVTSQLQATMVAPFTGLKSSAAFPVTRKTNTDITSIASNGGRVS) directs the protein to the chloroplast.

This sequence belongs to the RuBisCO small chain family. Heterohexadecamer of 8 large and 8 small subunits.

The protein localises to the plastid. The protein resides in the chloroplast. Functionally, ruBisCO catalyzes two reactions: the carboxylation of D-ribulose 1,5-bisphosphate, the primary event in carbon dioxide fixation, as well as the oxidative fragmentation of the pentose substrate. Both reactions occur simultaneously and in competition at the same active site. Although the small subunit is not catalytic it is essential for maximal activity. This chain is Ribulose bisphosphate carboxylase small subunit, chloroplastic, found in Raphanus sativus (Radish).